Here is a 363-residue protein sequence, read N- to C-terminus: Protein-arginine kinase (363 aa).

One can recognise a Phosphagen kinase C-terminal domain in the interval 24–254 (IVLSSRIRLA…AQLIEQERSA (231 aa)). 27 to 31 (SSRIR) contributes to the ATP binding site. 3 positions are modified to phosphoarginine; by autocatalysis: Arg29, Arg40, and Arg86. ATP is bound by residues His92, Arg125, and 176–180 (RASVM). Arg190 carries the post-translational modification Phosphoarginine; by autocatalysis. Residue 207 to 212 (RGIYGE) participates in ATP binding. Phosphoarginine; by autocatalysis occurs at positions 255, 269, and 272. The RDXXRA motif of the pArg binding pocket involved in allosteric regulation motif lies at 337–342 (RDIRRA). At Arg346 the chain carries Phosphoarginine; by autocatalysis.

The protein belongs to the ATP:guanido phosphotransferase family. As to quaternary structure, interacts with CtsR in its autophosphorylated form. Interacts with McsA in nonstressed as well as in heat-stressed cells, whereas strongly interacts with ClpC only in nonstressed cells. Autophosphorylated on Arg residues. Phosphorylation on Arg-40 and Arg-86 are up-regulated upon stress conditions.

The protein localises to the cytoplasm. It catalyses the reaction L-arginyl-[protein] + ATP = N(omega)-phospho-L-arginyl-[protein] + ADP + H(+). With respect to regulation, appears to be allosterically activated by the binding of pArg-containing polypeptides to the pArg-binding pocket localized in the C-terminal domain of McsB. The McsB kinase is inhibited in nonstressed cells by direct interaction with ClpC; upon heat exposure, the interaction of McsB with ClpC is dramatically decreased, leading to McsB release and activation during heat stress. Its kinase activity is counteracted by the protein-arginine-phosphatase YwlE in vivo. Requires McsA for full kinase activity. In terms of biological role, catalyzes the specific phosphorylation of arginine residues in a large number of proteins. Is part of the bacterial stress response system, where it is involved in regulating the global heat shock repressor CtsR; phosphorylates arginine residues in the winged helix-turn-helix domain of CtsR, thereby preventing its binding to DNA and consequently inducing the expression of repressed genes. The transcriptional repressor HrcA, the chaperone GroEL, the unfoldase ClpC, together with several ribosomal subunits, represent other physiological targets of McsB under stress conditions. Protein arginine phosphorylation has a physiologically important role and is involved in the regulation of many critical cellular processes, such as protein homeostasis, motility, competence, and stringent and stress responses, by regulating gene expression and protein activity. Functions as an adapter whose kinase activity is required for ClpCP-mediated degradation of CtsR during heat stress. Is required for the delocalization of competence proteins from the cell poles, probably via a role in the degradation of anchor proteins. In Bacillus subtilis (strain 168), this protein is Protein-arginine kinase.